We begin with the raw amino-acid sequence, 80 residues long: Cell division activator CedA (80 aa).

It belongs to the CedA family.

Activates the cell division inhibited by chromosomal DNA over-replication. In Escherichia coli O139:H28 (strain E24377A / ETEC), this protein is Cell division activator CedA.